A 199-amino-acid chain; its full sequence is Probable cobalt-precorrin-6B C(15)-methyltransferase (decarboxylating) (199 aa).

S-adenosyl-L-methionine contacts are provided by residues threonine 24, 48–52 (GCGTG), aspartate 72, and alanine 101.

Belongs to the methyltransferase superfamily. Archaeal-type CbiT family.

It catalyses the reaction Co-precorrin-6B + S-adenosyl-L-methionine = Co-precorrin-7 + S-adenosyl-L-homocysteine + CO2. Its pathway is cofactor biosynthesis; adenosylcobalamin biosynthesis; cob(II)yrinate a,c-diamide from sirohydrochlorin (anaerobic route): step 8/10. Functionally, catalyzes the methylation of C-15 in cobalt-precorrin-6B followed by the decarboxylation of C-12 to form cobalt-precorrin-7. The chain is Probable cobalt-precorrin-6B C(15)-methyltransferase (decarboxylating) from Saccharolobus islandicus (strain Y.N.15.51 / Yellowstone #2) (Sulfolobus islandicus).